An 878-amino-acid chain; its full sequence is Alanine--tRNA ligase (878 aa).

Residues His-565, His-569, Cys-667, and His-671 each contribute to the Zn(2+) site.

Belongs to the class-II aminoacyl-tRNA synthetase family. It depends on Zn(2+) as a cofactor.

It localises to the cytoplasm. The enzyme catalyses tRNA(Ala) + L-alanine + ATP = L-alanyl-tRNA(Ala) + AMP + diphosphate. Catalyzes the attachment of alanine to tRNA(Ala) in a two-step reaction: alanine is first activated by ATP to form Ala-AMP and then transferred to the acceptor end of tRNA(Ala). Also edits incorrectly charged Ser-tRNA(Ala) and Gly-tRNA(Ala) via its editing domain. The protein is Alanine--tRNA ligase of Desulforamulus reducens (strain ATCC BAA-1160 / DSM 100696 / MI-1) (Desulfotomaculum reducens).